The chain runs to 1291 residues: 1-phosphatidylinositol 4,5-bisphosphate phosphodiesterase gamma-1 (1291 aa).

Ala-2 bears the N-acetylalanine mark. Residues 27-142 (RSLEVGTVMT…WIRGLTWLME (116 aa)) enclose the PH 1 domain. One can recognise an EF-hand domain in the interval 152 to 187 (QIERWLRKQFYSVDRNREDRISAKDLKNMLSQVNYR). Asp-165, Asn-167, Glu-169, Arg-171, and Asp-176 together coordinate Ca(2+). The PI-PLC X-box domain maps to 320 to 464 (DTMNNPLSHY…LKRKILIKHK (145 aa)). Catalysis depends on residues His-335 and His-380. Residues 489–523 (SIKNGILYLEDPVNHEWYPHYFVLTSSKIYYSEET) form the PH 2; first part domain. The residue at position 506 (Tyr-506) is a Phosphotyrosine. Positions 522–544 (ETSSDQGNEDEEEPKEASGSTEL) are disordered. SH2 domains lie at 550 to 657 (WFHG…SEPV) and 668 to 756 (WYHA…RYPI). Residue Tyr-771 is modified to Phosphotyrosine; by SYK. 2 positions are modified to phosphotyrosine: Tyr-775 and Tyr-783. Phosphotyrosine; by ITK, SYK and TXK is present on Tyr-783. Residues 791 to 851 (TFKCAVKALF…PSNYVEEMVS (61 aa)) form the SH3 domain. A PH 2; second part domain is found at 895–931 (FVFSISMASVAHWSLDVAADSQEELQDWVKKIREVAQ). The PI-PLC Y-box domain maps to 953–1070 (LSELVVYCRP…GYVLQPSVMR (118 aa)). At Tyr-977 the chain carries Phosphotyrosine. Residues 1071–1194 (DEAFDPFDKS…TGYRAVPLKN (124 aa)) form the C2 domain. Phosphoserine is present on residues Ser-1222, Ser-1228, and Ser-1249. At Tyr-1254 the chain carries Phosphotyrosine. Ser-1264 carries the post-translational modification Phosphoserine. The disordered stretch occupies residues 1271 to 1291 (HFDGRDRRTPRRTRVNGDNRL).

As to quaternary structure, interacts with AGAP2 via its SH3 domain. Interacts (via SH2 domain) with RET. Interacts with FLT1 (tyrosine-phosphorylated). Interacts (via SH2 domain) with FGFR1, FGFR2, FGFR3 and FGFR4 (phosphorylated). Interacts with LAT (phosphorylated) upon TCR activation. Interacts (via SH3 domain) with the Pro-rich domain of TNK1. Associates with BLNK, VAV1, GRB2 and NCK1 in a B-cell antigen receptor-dependent fashion. Interacts with CBLB in activated T-cells; which inhibits phosphorylation. Interacts with SHB. Interacts (via SH3 domain) with the Arg/Gly-rich-flanked Pro-rich domains of KHDRBS1/SAM68. This interaction is selectively regulated by arginine methylation of KHDRBS1/SAM68. Interacts with INPP5D/SHIP1, THEMIS and CLNK. Interacts with AXL, FLT4 and KIT. Interacts with RALGPS1. Interacts (via the SH2 domains) with VIL1 (phosphorylated at C-terminus tyrosine phosphorylation sites). Interacts (via SH2 domain) with PDGFRA and PDGFRB (tyrosine phosphorylated). Interacts with PIP5K1C. Interacts with NTRK1 and NTRK2 (phosphorylated upon ligand-binding). Interacts with SYK; activates PLCG1. Interacts with GRB2, LAT and THEMIS upon TCR activation in thymocytes. Interacts with TESPA1; the association is increased with prolonged stimulation of the TCR and may facilitate the assembly of the LAT signalosome. Interacts (via C-terminal proline-rich domain (PRD)) with PLCG1 (via SH3 domain); this interaction leads to guanine nucleotide exchange from PlCG1 to DNM1 and enhances DNM1-dependent endocytosis. Requires Ca(2+) as cofactor. In terms of processing, ubiquitinated by CBLB in activated T-cells. Tyrosine phosphorylated in response to signaling via activated FLT3, KIT and PDGFRA. Tyrosine phosphorylated by activated FGFR1, FGFR2, FGFR3 and FGFR4. Tyrosine phosphorylated by activated FLT1 and KDR. Tyrosine phosphorylated by activated PDGFRB. The receptor-mediated activation of PLCG1 involves its phosphorylation by tyrosine kinases, in response to ligation of a variety of growth factor receptors and immune system receptors. For instance, SYK phosphorylates and activates PLCG1 in response to ligation of the B-cell receptor. May be dephosphorylated by PTPRJ. Phosphorylated by ITK and TXK on Tyr-783 upon TCR activation in T-cells.

It is found in the cell projection. The protein localises to the lamellipodium. The protein resides in the ruffle. The catalysed reaction is a 1,2-diacyl-sn-glycero-3-phospho-(1D-myo-inositol-4,5-bisphosphate) + H2O = 1D-myo-inositol 1,4,5-trisphosphate + a 1,2-diacyl-sn-glycerol + H(+). It carries out the reaction a 1,2-diacyl-sn-glycero-3-phospho-(1D-myo-inositol) + H2O = 1D-myo-inositol 1-phosphate + a 1,2-diacyl-sn-glycerol + H(+). With respect to regulation, activated by phosphorylation on tyrosine residues. Its function is as follows. Mediates the production of the second messenger molecules diacylglycerol (DAG) and inositol 1,4,5-trisphosphate (IP3). Plays an important role in the regulation of intracellular signaling cascades. Becomes activated in response to ligand-mediated activation of receptor-type tyrosine kinases, such as PDGFRA, PDGFRB, EGFR, FGFR1, FGFR2, FGFR3 and FGFR4. Plays a role in actin reorganization and cell migration. Guanine nucleotide exchange factor that binds the GTPase DNM1 and catalyzes the dissociation of GDP, allowing a GTP molecule to bind in its place, therefore enhancing DNM1-dependent endocytosis. This Bos taurus (Bovine) protein is 1-phosphatidylinositol 4,5-bisphosphate phosphodiesterase gamma-1.